The following is a 238-amino-acid chain: Hydatid disease diagnostic antigen P-29 (238 aa).

The BAR domain maps to 18–238; it reads GELVNKNEKT…AKECSMMLGE (221 aa).

The chain is Hydatid disease diagnostic antigen P-29 from Echinococcus granulosus (Hydatid tapeworm).